A 446-amino-acid polypeptide reads, in one-letter code: Anthranilate N-benzoyltransferase protein 2 (446 aa).

Residues H164 and D393 each act as proton acceptor in the active site.

It belongs to the plant acyltransferase family. N-terminus is blocked.

The catalysed reaction is anthranilate + benzoyl-CoA = N-benzoylanthranilate + CoA. It participates in phytoalexin biosynthesis; methoxydianthramide B biosynthesis. In terms of biological role, catalyzes the formation of N-benzoylanthranilate, in the course of methoxydianthramide B, a phytoalexin. Phytoalexins are produced in response to infection by parasites, and are essential for the expression of disease resistance. This is Anthranilate N-benzoyltransferase protein 2 (HCBT2) from Dianthus caryophyllus (Carnation).